An 84-amino-acid polypeptide reads, in one-letter code: UPF0410 protein YmgE (84 aa).

3 helical membrane passes run 1–21 (MGII…KLIM), 27–47 (GGFF…GWLA), and 58–78 (GFNL…LGIF).

Belongs to the UPF0410 family.

The protein resides in the cell inner membrane. The chain is UPF0410 protein YmgE (ymgE) from Escherichia coli (strain K12).